We begin with the raw amino-acid sequence, 244 residues long: Probable septum site-determining protein MinC (244 aa).

Belongs to the MinC family. In terms of assembly, interacts with MinD and FtsZ.

Functionally, cell division inhibitor that blocks the formation of polar Z ring septums. Rapidly oscillates between the poles of the cell to destabilize FtsZ filaments that have formed before they mature into polar Z rings. Prevents FtsZ polymerization. The polypeptide is Probable septum site-determining protein MinC (Dichelobacter nodosus (strain VCS1703A)).